The chain runs to 122 residues: Yop proteins translocation protein X (122 aa).

The stretch at 71–87 (HRAQDYRRELDTLQSLL) forms a coiled coil.

In terms of assembly, interacts with YscY.

It is found in the secreted. Required for Yop secretion. The protein is Yop proteins translocation protein X (yscX) of Yersinia enterocolitica serotype O:8 / biotype 1B (strain NCTC 13174 / 8081).